Here is a 207-residue protein sequence, read N- to C-terminus: Suppressor of IKBKE 1 (207 aa).

2 coiled-coil regions span residues 4–32 (TIDKILQDAKTLLERLKDHDNAAESLIDQ) and 154–193 (DAIQLDEDKAYNIQEKLAQLELENKELREILSTSKESLHS). The tract at residues 186–207 (TSKESLHSSKRESEWNFSEKTQ) is disordered. The segment covering 189–199 (ESLHSSKRESE) has biased composition (basic and acidic residues).

It belongs to the SIKE family. As to quaternary structure, interacts with IKBKE and TBK1 via its coiled coil region. Interaction with TBK1 is disrupted upon viral infection or TLR3 stimulation. Interacts with CDC42BPB. Associates with the STRIPAK core complex composed of PP2A catalytic and scaffolding subunits, the striatins (PP2A regulatory subunits), the striatin-associated proteins MOB4, STRIP1 and STRIP2, PDCD10 and members of the STE20 kinases, such as STK24 and STK26.

In terms of biological role, suppressor of IKK-epsilon. Associates with the striatin-interacting phosphatase and kinase (STRIPAK) core complex, forming the extended (SIKE1:SLMAP)STRIPAK complex. The (SIKE1:SLMAP)STRIPAK complex dephosphorylates STK3 leading to the inhibition of Hippo signaling and the control of cell growth. The protein is Suppressor of IKBKE 1 (sike1) of Xenopus tropicalis (Western clawed frog).